Here is a 174-residue protein sequence, read N- to C-terminus: Ribosome maturation factor RimM (174 aa).

Residues 97–169 (GNKFYFHEVI…KVVMDLPEGL (73 aa)) form the PRC barrel domain.

This sequence belongs to the RimM family. As to quaternary structure, binds ribosomal protein uS19.

The protein resides in the cytoplasm. Functionally, an accessory protein needed during the final step in the assembly of 30S ribosomal subunit, possibly for assembly of the head region. Essential for efficient processing of 16S rRNA. May be needed both before and after RbfA during the maturation of 16S rRNA. It has affinity for free ribosomal 30S subunits but not for 70S ribosomes. The chain is Ribosome maturation factor RimM from Flavobacterium psychrophilum (strain ATCC 49511 / DSM 21280 / CIP 103535 / JIP02/86).